The sequence spans 551 residues: (6-4)DNA photolyase (551 aa).

Positions 13-157 (AAAMVWFRKG…DVFSPVSHTL (145 aa)) constitute a Photolyase/cryptochrome alpha/beta domain. Glu-254 contributes to the phosphate binding site. Residues Lys-255, 268–272 (TTVLS), 309–313 (QLLWR), 372–375 (WMHH), Arg-378, 407–409 (DSD), and Asn-413 contribute to the FAD site. Position 312 (Trp-312) interacts with DNA. Positions 374-379 (HHLARH) are interaction with DNA. Position 419 (Trp-419) interacts with DNA. The interval 508–551 (YASNRLDDDKPDKGKSSNSSRRKLSAGSQVTPNSSKTKQLKRSS) is disordered. Over residues 512-522 (RLDDDKPDKGK) the composition is skewed to basic and acidic residues. A compositionally biased stretch (polar residues) spans 533 to 544 (AGSQVTPNSSKT).

It belongs to the DNA photolyase class-1 family. The cofactor is FAD.

It carries out the reaction (6-4) photoproduct (in DNA) = 2 pyrimidine residues (in DNA).. Functionally, involved in repair of UV radiation-induced DNA damage. Catalyzes the photoreactivation of pyrimidine [6-4] pyrimidone photoproduct (6-4 products). This is (6-4)DNA photolyase (UVR3) from Oryza sativa subsp. japonica (Rice).